The following is a 404-amino-acid chain: Subtilisin-like proteinase Mp1 (404 aa).

The first 19 residues, M1–A19, serve as a signal peptide directing secretion. A propeptide spanning residues A20 to Y112 is cleaved from the precursor. Residues S33 to L111 form the Inhibitor I9 domain. Residues P121–A404 enclose the Peptidase S8 domain. N133 carries N-linked (GlcNAc...) asparagine glycosylation. Residues D154, H186, and S347 each act as charge relay system in the active site.

The protein belongs to the peptidase S8 family.

The protein resides in the secreted. This is Subtilisin-like proteinase Mp1 from Magnaporthiopsis poae (Kentucky bluegrass fungus).